The sequence spans 670 residues: Proline-rich receptor-like protein kinase PERK5 (670 aa).

The interval 1–181 is disordered; it reads MADSPVDSSP…SGDSDSSSGN (181 aa). Over 1–186 the chain is Extracellular; the sequence is MADSPVDSSP…SSSGNHPQAN (186 aa). Low complexity predominate over residues 14–31; it reads TSNGTPPSNGTSPSNESS. Residues N22 and N28 are each glycosylated (N-linked (GlcNAc...) asparagine). Composition is skewed to pro residues over residues 32–62 and 84–109; these read PPTP…PAPP and PQTP…PPQT. N130 carries N-linked (GlcNAc...) asparagine glycosylation. The segment covering 132-141 has biased composition (low complexity); sequence TNGGNNNRDG. A glycan (N-linked (GlcNAc...) asparagine) is linked at N151. Residues 167-181 are compositionally biased toward low complexity; it reads SPPQNSGDSDSSSGN. Residues 187–207 traverse the membrane as a helical segment; the sequence is IGLIIGVLVGAGLLLLLAVCI. Residues 208–670 are Cytoplasmic-facing; the sequence is CICCNRKKKK…RGSMKRNPQL (463 aa). T301 is subject to Phosphothreonine. The Protein kinase domain occupies 312 to 590; that stretch reads FAQSNLLGQG…VRALEGDMSM (279 aa). Residues 318–326 and K340 contribute to the ATP site; that span reads LGQGGFGYV. Y385 is modified (phosphotyrosine). The active-site Proton acceptor is D436. A Phosphoserine modification is found at S469. Phosphothreonine is present on residues T470 and T475. Y483 carries the phosphotyrosine modification. 2 disordered regions span residues 589 to 613 and 635 to 670; these read SMDD…VSSE and EYQS…NPQL. A compositionally biased stretch (polar residues) spans 599–613; that stretch reads PGQSTYLSPGSVSSE.

It belongs to the protein kinase superfamily. Ser/Thr protein kinase family. In terms of tissue distribution, mostly expressed in flower buds.

It is found in the cell membrane. The enzyme catalyses L-seryl-[protein] + ATP = O-phospho-L-seryl-[protein] + ADP + H(+). The catalysed reaction is L-threonyl-[protein] + ATP = O-phospho-L-threonyl-[protein] + ADP + H(+). The protein is Proline-rich receptor-like protein kinase PERK5 (PERK5) of Arabidopsis thaliana (Mouse-ear cress).